Here is a 67-residue protein sequence, read N- to C-terminus: Large ribosomal subunit protein bL32 (67 aa).

The disordered stretch occupies residues 1 to 44 (MAVQQNRKSPSKRDMRRSHDALGFSTLSTDSKSGERHRRHHVTK). Over residues 11-20 (SKRDMRRSHD) the composition is skewed to basic and acidic residues.

The protein belongs to the bacterial ribosomal protein bL32 family.

This is Large ribosomal subunit protein bL32 from Dichelobacter nodosus (strain VCS1703A).